Consider the following 327-residue polypeptide: Annexin A8 (327 aa).

4 Annexin repeats span residues 21 to 92 (FNPD…ALMY), 93 to 164 (PPYR…CLLQ), 177 to 249 (GLAL…TVVK), and 253 to 324 (NLHS…SLVG). 4 residues coordinate Ca(2+): Met-266, Gly-268, Gly-270, and Asp-310.

The protein belongs to the annexin family.

This protein is an anticoagulant protein that acts as an indirect inhibitor of the thromboplastin-specific complex, which is involved in the blood coagulation cascade. The polypeptide is Annexin A8 (ANXA8) (Pan troglodytes (Chimpanzee)).